Consider the following 428-residue polypeptide: Adenylosuccinate synthetase (428 aa).

Residues 12–18 (GDEGKGK) and 40–42 (GHT) each bind GTP. D13 functions as the Proton acceptor in the catalytic mechanism. Residues D13 and G40 each contribute to the Mg(2+) site. Residues 13 to 16 (DEGK), 38 to 41 (NAGH), T128, R142, Q223, T238, and R302 contribute to the IMP site. Residue H41 is the Proton donor of the active site. 298–304 (VTTGRPR) is a binding site for substrate. Residues R304, 330 to 332 (KLD), and 412 to 414 (GVG) contribute to the GTP site.

The protein belongs to the adenylosuccinate synthetase family. In terms of assembly, homodimer. Mg(2+) serves as cofactor.

Its subcellular location is the cytoplasm. It catalyses the reaction IMP + L-aspartate + GTP = N(6)-(1,2-dicarboxyethyl)-AMP + GDP + phosphate + 2 H(+). It participates in purine metabolism; AMP biosynthesis via de novo pathway; AMP from IMP: step 1/2. Functionally, plays an important role in the de novo pathway of purine nucleotide biosynthesis. Catalyzes the first committed step in the biosynthesis of AMP from IMP. The chain is Adenylosuccinate synthetase from Halothermothrix orenii (strain H 168 / OCM 544 / DSM 9562).